The sequence spans 158 residues: PTS system fructose-specific EIIB component (158 aa).

Residues 1 to 98 (MKLVAVTSCP…AEAVVQKAVE (98 aa)) form the PTS EIIB type-2 domain. Cys9 acts as the Phosphocysteine intermediate in catalysis. Cys9 carries the phosphocysteine; by EIIA modification. The interval 104–147 (KTGSVTFGSGDDGEDADVGADDSSDDADAAESDEPVRRGGDPEK) is disordered. Acidic residues predominate over residues 114 to 136 (DDGEDADVGADDSSDDADAAESD). Positions 137-147 (EPVRRGGDPEK) are enriched in basic and acidic residues.

The protein resides in the cytoplasm. It carries out the reaction D-fructose(out) + N(pros)-phospho-L-histidyl-[protein] = D-fructose 1-phosphate(in) + L-histidyl-[protein]. Functionally, the phosphoenolpyruvate-dependent sugar phosphotransferase system (sugar PTS), a major carbohydrate active transport system, catalyzes the phosphorylation of incoming sugar substrates concomitantly with their translocation across the cell membrane. The enzyme II PtfABC PTS system is involved in fructose transport. The sequence is that of PTS system fructose-specific EIIB component from Haloferax volcanii (strain ATCC 29605 / DSM 3757 / JCM 8879 / NBRC 14742 / NCIMB 2012 / VKM B-1768 / DS2) (Halobacterium volcanii).